The following is a 415-amino-acid chain: MFERSRYTIDQIDPEVFAAIQKENQRQEDHIELIASENYTSPAVMAAQGSQLTNKYAEGYPGKRYYGGCEYVDIVEQLAIDRVKQLFGAEAANVQPNSGSQANQGVYFAVLKPGDTIMGMSLAEGGHLTHGMALNMSGKWFNVVSYGLNAQEDIDYDALEKLAQEKKPKLIIAGASAFALRIDFERIGKVAKSIGAYFMVDMAHYAGLIAAGVYPNPVPHADFVTTTTHKSLRGPRGGVILMKAEHEKAINSSIFPGIQGGPLMHVIAGKAVAFKEALTPEFKAYQEQVVKNAAVLAETLIARGLRIVSGRTESHVMLVDLRAKNITGKEAERILGEAHLTVNKNAIPNDPEKPFVTSGIRVGSPAMTTRGFKEEEARIVGNLIADVLDNPHDAGNIASVREQVSALTKRFPVYG.

(6S)-5,6,7,8-tetrahydrofolate-binding positions include L122 and 126–128 (GHL). K230 carries the N6-(pyridoxal phosphate)lysine modification.

This sequence belongs to the SHMT family. In terms of assembly, homodimer. It depends on pyridoxal 5'-phosphate as a cofactor.

It localises to the cytoplasm. The catalysed reaction is (6R)-5,10-methylene-5,6,7,8-tetrahydrofolate + glycine + H2O = (6S)-5,6,7,8-tetrahydrofolate + L-serine. The protein operates within one-carbon metabolism; tetrahydrofolate interconversion. It functions in the pathway amino-acid biosynthesis; glycine biosynthesis; glycine from L-serine: step 1/1. In terms of biological role, catalyzes the reversible interconversion of serine and glycine with tetrahydrofolate (THF) serving as the one-carbon carrier. This reaction serves as the major source of one-carbon groups required for the biosynthesis of purines, thymidylate, methionine, and other important biomolecules. Also exhibits THF-independent aldolase activity toward beta-hydroxyamino acids, producing glycine and aldehydes, via a retro-aldol mechanism. This Cupriavidus pinatubonensis (strain JMP 134 / LMG 1197) (Cupriavidus necator (strain JMP 134)) protein is Serine hydroxymethyltransferase 1.